The sequence spans 116 residues: G antigen 10 (116 aa).

Positions 1-116 are disordered; sequence MSWRGRSTYR…PEEGEKQSQC (116 aa). Over residues 31–44 the composition is skewed to acidic residues; that stretch reads FSDEVEPATPEEGE. Basic and acidic residues-rich tracts occupy residues 71 to 80 and 102 to 116; these read PEADSQEQVH and EEVK…QSQC.

The protein belongs to the GAGE family.

The protein is G antigen 10 (GAGE10) of Homo sapiens (Human).